The following is a 1248-amino-acid chain: ATP-dependent helicase/nuclease subunit A (1248 aa).

The UvrD-like helicase ATP-binding domain maps to 4 to 480 (TKWTKEQYAA…ILLFKNFRSR (477 aa)). ATP is bound at residue 25–32 (AAAGAGKT). In terms of domain architecture, UvrD-like helicase C-terminal spans 523-820 (ETVVGGAIEL…RLMSIHKSKG (298 aa)).

This sequence belongs to the helicase family. AddA subfamily. As to quaternary structure, heterodimer of AddA and AddB/RexB. Mg(2+) serves as cofactor.

It catalyses the reaction Couples ATP hydrolysis with the unwinding of duplex DNA by translocating in the 3'-5' direction.. The enzyme catalyses ATP + H2O = ADP + phosphate + H(+). In terms of biological role, the heterodimer acts as both an ATP-dependent DNA helicase and an ATP-dependent, dual-direction single-stranded exonuclease. Recognizes the chi site generating a DNA molecule suitable for the initiation of homologous recombination. The AddA nuclease domain is required for chi fragment generation; this subunit has the helicase and 3' -&gt; 5' nuclease activities. The chain is ATP-dependent helicase/nuclease subunit A from Ruminiclostridium cellulolyticum (strain ATCC 35319 / DSM 5812 / JCM 6584 / H10) (Clostridium cellulolyticum).